The sequence spans 151 residues: UPF0208 membrane protein Ent638_2839 (151 aa).

Transmembrane regions (helical) follow at residues 46–65 (YAIR…QIAL) and 69–91 (LGPA…WWLG).

This sequence belongs to the UPF0208 family.

The protein localises to the cell inner membrane. This Enterobacter sp. (strain 638) protein is UPF0208 membrane protein Ent638_2839.